The primary structure comprises 392 residues: tRNA (guanine-N(7)-)-methyltransferase (392 aa).

S-adenosyl-L-methionine-binding residues include Glu-123, Glu-148, and Asp-175. Substrate is bound by residues Lys-201 and Asp-231.

It belongs to the class I-like SAM-binding methyltransferase superfamily. TrmB family.

It carries out the reaction guanosine(46) in tRNA + S-adenosyl-L-methionine = N(7)-methylguanosine(46) in tRNA + S-adenosyl-L-homocysteine. The protein operates within tRNA modification; N(7)-methylguanine-tRNA biosynthesis. Catalyzes the formation of N(7)-methylguanine at position 46 (m7G46) in tRNA. The polypeptide is tRNA (guanine-N(7)-)-methyltransferase (Campylobacter jejuni subsp. doylei (strain ATCC BAA-1458 / RM4099 / 269.97)).